The sequence spans 1039 residues: FHIP family protein GG24907 (1039 aa).

Serine 498 and serine 805 each carry phosphoserine. Disordered stretches follow at residues 831–877 (ATPT…SASS), 904–945 (GISQ…SNSS), and 957–984 (SNTTTHSASTLHGLDGGPSTGGFNSEPA). Composition is skewed to polar residues over residues 855–877 (TSMFSRKSASTSTTPPNGSSASS) and 904–924 (GISQAQTSAGTCETSLSTQPQ). The segment covering 925 to 945 (AGASRTGATATSAAASGSNSS) has biased composition (low complexity). The segment covering 957-966 (SNTTTHSAST) has biased composition (polar residues).

It belongs to the FHIP family.

The polypeptide is FHIP family protein GG24907 (Drosophila erecta (Fruit fly)).